Reading from the N-terminus, the 159-residue chain is Transcription elongation factor A protein-like 1 (159 aa).

The segment at 1-97 (MDKPRKENEE…PPCGVGKHKL (97 aa)) is disordered. The span at 17 to 34 (KTDEERPPVEHSPEKQSP) shows a compositional bias: basic and acidic residues. Phosphoserine occurs at positions 28, 33, 38, 39, 43, and 44. Residues 37–54 (QSSEEQSSEEEFFPEELL) show a composition bias toward acidic residues. Residues 64 to 80 (SEERPPQEGLSRKDLFE) are compositionally biased toward basic and acidic residues.

It belongs to the TFS-II family. TFA subfamily. In terms of processing, phosphorylation of Ser-38 and Ser-39 is critical for transcriptional repression. Expressed in all tissues examined. Highly expressed in heart, ovary, prostate and skeletal muscle. Moderately expressed in brain, placenta, testis and small intestine. Weakly expressed in lung, liver and spleen. Expressed in several cancer cell lines.

It localises to the nucleus. Functionally, may be involved in transcriptional regulation. Modulates various viral and cellular promoters in a promoter context-dependent manner. For example, transcription from the FOS promoter is increased, while Rous sarcoma virus (RSV) long terminal repeat (LTR) promoter activity is repressed. Does not bind DNA directly. This Homo sapiens (Human) protein is Transcription elongation factor A protein-like 1.